Consider the following 516-residue polypeptide: Cytochrome P450 93G1 (516 aa).

A helical transmembrane segment spans residues 11–31 (LLGMGTTMGALALALVVVVVV). Residue Cys454 coordinates heme.

The protein belongs to the cytochrome P450 family. Heme is required as a cofactor.

The protein localises to the membrane. It carries out the reaction a flavanone + reduced [NADPH--hemoprotein reductase] + O2 = a flavone + oxidized [NADPH--hemoprotein reductase] + 2 H2O + H(+). The protein operates within secondary metabolite biosynthesis; flavonoid biosynthesis. Its function is as follows. Functions as a flavone synthase II (FNSII) that catalyzes the direct conversion of flavanones to flavones. In vitro, can convert naringenin and eriodictyol to apigenin and luteolin, respectively. Acts as a key branch point enzyme that channels flavanones to the biosynthesis of soluble tricin O-linked conjugates. In Oryza sativa subsp. japonica (Rice), this protein is Cytochrome P450 93G1.